Consider the following 145-residue polypeptide: 3-dehydroquinate dehydratase (145 aa).

The Proton acceptor role is filled by Tyr-23. Substrate contacts are provided by Asn-75, His-81, and Asp-88. The Proton donor role is filled by His-101. Substrate-binding positions include 102 to 103 (IS) and Arg-112.

This sequence belongs to the type-II 3-dehydroquinase family. In terms of assembly, homododecamer.

The enzyme catalyses 3-dehydroquinate = 3-dehydroshikimate + H2O. The protein operates within metabolic intermediate biosynthesis; chorismate biosynthesis; chorismate from D-erythrose 4-phosphate and phosphoenolpyruvate: step 3/7. In terms of biological role, catalyzes a trans-dehydration via an enolate intermediate. This is 3-dehydroquinate dehydratase from Caldicellulosiruptor saccharolyticus (strain ATCC 43494 / DSM 8903 / Tp8T 6331).